A 537-amino-acid polypeptide reads, in one-letter code: Asparagine-rich protein (537 aa).

5 disordered regions span residues 1 to 22, 187 to 254, 336 to 372, 399 to 479, and 509 to 528; these read YNNN…QNTN, NMNI…NNNF, YNNN…YGYD, LNNN…DDWG, and DLSK…MKKD. Composition is skewed to low complexity over residues 336-347 and 399-469; these read YNNNESNTANPN and LNNN…NQNN. A compositionally biased stretch (acidic residues) spans 470–479; it reads NEDEDDDDWG. The span at 509 to 518 shows a compositional bias: basic and acidic residues; the sequence is DLSKKGNDGK.

The sequence is that of Asparagine-rich protein from Plasmodium falciparum.